A 341-amino-acid chain; its full sequence is MQEGELAISPISPVAAMPPLGTHVQARCEAQINLLGEGGICKLPGRLRIQPALWSREDVLHWLRWAEQEYSLPCTAEHGFEMNGRALCILTKDDFRHRAPSSGDVLYELLQYIKTQRRALVCGPFFGGIFRLKTPTQHSPVPPEEVTGPSQMDTRRGHLLQPPDPGLTSNFGHLDDPGLARWTPGKEESLNLCHCAELGCRTQGVCSFPAMPQAPIDGRIADCRLLWDYVYQLLLDTRYEPYIKWEDKDAKIFRVVDPNGLARLWGNHKNRVNMTYEKMSRALRHYYKLNIIKKEPGQKLLFRFLKTPGKMVQDKHSHLEPLESQEQDRIEFKDKRPEISP.

The PNT domain occupies 33–117; sequence NLLGEGGICK…ELLQYIKTQR (85 aa). Residues 224–305 constitute a DNA-binding region (ETS); the sequence is RLLWDYVYQL…PGQKLLFRFL (82 aa). A disordered region spans residues 315-341; sequence KHSHLEPLESQEQDRIEFKDKRPEISP.

Belongs to the ETS family. Expressed in hematopoietic tissues.

It localises to the nucleus. Its function is as follows. Transcriptional repressor; binds to the DNA sequence 5'-CCGGAAGT-3'. Isoform A does not seem to have a repressor activity. Isoform C does not seem to have a repressor activity. The chain is Transcription factor ETV7 (ETV7) from Homo sapiens (Human).